Here is a 352-residue protein sequence, read N- to C-terminus: S-adenosylmethionine:tRNA ribosyltransferase-isomerase (352 aa).

It belongs to the QueA family. As to quaternary structure, monomer.

The protein resides in the cytoplasm. The enzyme catalyses 7-aminomethyl-7-carbaguanosine(34) in tRNA + S-adenosyl-L-methionine = epoxyqueuosine(34) in tRNA + adenine + L-methionine + 2 H(+). It participates in tRNA modification; tRNA-queuosine biosynthesis. Its function is as follows. Transfers and isomerizes the ribose moiety from AdoMet to the 7-aminomethyl group of 7-deazaguanine (preQ1-tRNA) to give epoxyqueuosine (oQ-tRNA). The polypeptide is S-adenosylmethionine:tRNA ribosyltransferase-isomerase (Syntrophomonas wolfei subsp. wolfei (strain DSM 2245B / Goettingen)).